A 250-amino-acid polypeptide reads, in one-letter code: Anti-Pycsar protein Apyc1 (250 aa).

A beta-lactamase-like region spans residues 19–220; that stretch reads YNNNALVKCN…AVQEMIMLMH (202 aa). 7 residues coordinate Zn(2+): His61, His63, Asp65, His66, His146, Asp166, and His220.

It belongs to the anti-Pycsar protein Apyc1 family. In terms of assembly, homodimer. Zn(2+) is required as a cofactor.

The catalysed reaction is 3',5'-cyclic CMP + H2O = CMP + H(+). It catalyses the reaction 3',5'-cyclic UMP + H2O = UMP + H(+). Its function is as follows. Counteracts the endogenous Pycsar antiviral defense system. Phosphodiesterase that enables metal-dependent hydrolysis of host cyclic nucleotide Pycsar defense signals such as cCMP and cUMP. The polypeptide is Anti-Pycsar protein Apyc1 (Paenibacillus xerothermodurans).